The chain runs to 202 residues: Dephospho-CoA kinase (202 aa).

The DPCK domain maps to 4–201 (VVALTGGIAS…QKYLAMSRQN (198 aa)). Residue 12–17 (ASGKTT) coordinates ATP.

It belongs to the CoaE family.

The protein resides in the cytoplasm. It carries out the reaction 3'-dephospho-CoA + ATP = ADP + CoA + H(+). It functions in the pathway cofactor biosynthesis; coenzyme A biosynthesis; CoA from (R)-pantothenate: step 5/5. In terms of biological role, catalyzes the phosphorylation of the 3'-hydroxyl group of dephosphocoenzyme A to form coenzyme A. The sequence is that of Dephospho-CoA kinase from Vibrio cholerae serotype O1 (strain ATCC 39315 / El Tor Inaba N16961).